A 462-amino-acid chain; its full sequence is ATP synthase subunit beta (462 aa).

Residue 151 to 158 (GGAGVGKT) coordinates ATP.

This sequence belongs to the ATPase alpha/beta chains family. F-type ATPases have 2 components, CF(1) - the catalytic core - and CF(0) - the membrane proton channel. CF(1) has five subunits: alpha(3), beta(3), gamma(1), delta(1), epsilon(1). CF(0) has four main subunits: a(1), b(1), b'(1) and c(9-12).

It is found in the cell inner membrane. The enzyme catalyses ATP + H2O + 4 H(+)(in) = ADP + phosphate + 5 H(+)(out). Functionally, produces ATP from ADP in the presence of a proton gradient across the membrane. The catalytic sites are hosted primarily by the beta subunits. This is ATP synthase subunit beta from Chlorobium phaeobacteroides (strain BS1).